A 207-amino-acid polypeptide reads, in one-letter code: Keratin-associated protein 27-1 (207 aa).

The interval 184–207 (QLLESSPGVEPTCCVTGGSQLPSK) is disordered.

The protein belongs to the PMG family. Interacts with hair keratins.

In the hair cortex, hair keratin intermediate filaments are embedded in an interfilamentous matrix, consisting of hair keratin-associated proteins (KRTAP), which are essential for the formation of a rigid and resistant hair shaft through their extensive disulfide bond cross-linking with abundant cysteine residues of hair keratins. The matrix proteins include the high-sulfur and high-glycine-tyrosine keratins. The protein is Keratin-associated protein 27-1 (KRTAP27-1) of Homo sapiens (Human).